The sequence spans 1013 residues: Endosome/lysosome-associated apoptosis and autophagy regulator 1 (1013 aa).

Positions 1–41 (MAEPGHSHHLSARVRGRTERRIPRLWRLLLWAGTAFQVTQG) are cleaved as a signal peptide. The Extracellular segment spans residues 42 to 910 (TGPELHACKE…ICKTIDFWLK (869 aa)). Residue asparagine 153 is glycosylated (N-linked (GlcNAc...) asparagine). 3 disulfide bridges follow: cysteine 278–cysteine 295, cysteine 308–cysteine 330, and cysteine 311–cysteine 342. 2 N-linked (GlcNAc...) asparagine glycosylation sites follow: asparagine 404 and asparagine 672. Residues 656 to 858 (NDCTFSRNTP…LWESAAACPL (203 aa)) form the MRH domain. Intrachain disulfides connect cysteine 658-cysteine 704, cysteine 714-cysteine 739, cysteine 808-cysteine 844, and cysteine 820-cysteine 856. A helical membrane pass occupies residues 911 to 931 (VGISAGTCTAILLTVLTCYFW). Residues 932–1013 (KKNQKLEYKY…TSSGGLDMDL (82 aa)) are Cytoplasmic-facing.

This sequence belongs to the ELAPOR family. As to quaternary structure, interacts with HSPA5; may regulate the function of HSPA5 in apoptosis and cell proliferation. Expressed in normal endometrium but overexpressed in endometroid tumors.

It is found in the cell membrane. The protein localises to the late endosome membrane. Its subcellular location is the golgi apparatus. It localises to the trans-Golgi network membrane. The protein resides in the lysosome membrane. It is found in the endoplasmic reticulum membrane. In terms of biological role, may protect cells from cell death by inducing cytosolic vacuolization and up-regulating the autophagy pathway. May play a role in apoptosis and cell proliferation through its interaction with HSPA5. The sequence is that of Endosome/lysosome-associated apoptosis and autophagy regulator 1 from Homo sapiens (Human).